The primary structure comprises 455 residues: SVGFKAGVKDYKLTYYTPDYKTKDTDILAAFRVTPQPGVPPEEAGAAVAAESSTGTWTTVWTDGLTSLDRYKGRCYHIEPVAGEESQFIAYVAYPLDLFEEGSVTNMFTSIVGNVFGFKALRALRLEDLRIPNAYVKTFQGPPHGIQVERDKLNKYGRPLLGCTIKPKLGLSAKNYGRAVYECLRGGLDFTKDDENVNSQPFMRWRDRFLFCAEALYKAQAETGEIKGHYLNATAGTCEEMIKRAVFARELGVPIVMHDYLTGGFTANTSLSHYCRDNGLLLHIHRAMHAVIDRQKNHGMHFRVLAKALRLSGGDHIHSGTVVGKLEGEREITLGFVDLLRDDFVEKDRSRGIYFTQDWVSLPGVLPVASGGIHVWHMPALTEIFGDDSVLQFGGGTLGHPWGNAPGAVANRVALEACVQARNEGRDLASEGNQIIREASKWSPELAAACEVWKE.

Lys-5 is modified (N6,N6,N6-trimethyllysine). The substrate site is built by Asn-114 and Thr-164. Catalysis depends on Lys-166, which acts as the Proton acceptor. Lys-168 contributes to the substrate binding site. Positions 192, 194, and 195 each coordinate Mg(2+). An N6-carboxylysine modification is found at Lys-192. The Proton acceptor role is filled by His-285. Positions 286, 318, and 370 each coordinate substrate.

The protein belongs to the RuBisCO large chain family. Type I subfamily. In terms of assembly, heterohexadecamer of 8 large chains and 8 small chains; disulfide-linked. The disulfide link is formed within the large subunit homodimers. Mg(2+) is required as a cofactor. Post-translationally, the disulfide bond which can form in the large chain dimeric partners within the hexadecamer appears to be associated with oxidative stress and protein turnover.

The protein resides in the plastid. The protein localises to the chloroplast. It carries out the reaction 2 (2R)-3-phosphoglycerate + 2 H(+) = D-ribulose 1,5-bisphosphate + CO2 + H2O. The enzyme catalyses D-ribulose 1,5-bisphosphate + O2 = 2-phosphoglycolate + (2R)-3-phosphoglycerate + 2 H(+). RuBisCO catalyzes two reactions: the carboxylation of D-ribulose 1,5-bisphosphate, the primary event in carbon dioxide fixation, as well as the oxidative fragmentation of the pentose substrate in the photorespiration process. Both reactions occur simultaneously and in competition at the same active site. The polypeptide is Ribulose bisphosphate carboxylase large chain (Lupinus luteus (European yellow lupine)).